Reading from the N-terminus, the 550-residue chain is Leucine-rich repeat LGI family member 2 (550 aa).

The signal sequence occupies residues 1 to 25; the sequence is MALWRGGGALGLLLLSAACLIPPSA. Residues 26-62 form the LRRNT domain; that stretch reads QVRRLARCPATCSCTKESIICVGSSWVPRIVPGDISS. Asn-67 carries N-linked (GlcNAc...) asparagine glycosylation. 2 LRR repeats span residues 83–104 and 107–128; these read SLQLLLLNSNSFTVIRDDAFAG and HLEYLFIEGNKIETISRNAFRG. The 51-residue stretch at 140-190 folds into the LRRCT domain; the sequence is NKFECDCKAKWLYLWLKMTNSTVSDVLCIGPPEYQEKKLNEVTSFDYECTT. Asn-159 is a glycosylation site (N-linked (GlcNAc...) asparagine). EAR repeat units lie at residues 224 to 266, 270 to 312, 316 to 363, 365 to 408, 412 to 455, 457 to 499, and 503 to 545; these read DFVV…EWDH, NFRS…KYDE, KFVK…KWNS, GFYS…QWNK, KFVP…RWNS, QFVE…QWDK, and QFKK…EHII. Asn-276 is a glycosylation site (N-linked (GlcNAc...) asparagine). N-linked (GlcNAc...) asparagine glycosylation occurs at Asn-407.

In terms of tissue distribution, brain.

Its subcellular location is the secreted. Functionally, required for the development of soma-targeting inhibitory GABAergic synapses made by parvalbumin-positive basket cells. The sequence is that of Leucine-rich repeat LGI family member 2 (Lgi2) from Mus musculus (Mouse).